A 1722-amino-acid polypeptide reads, in one-letter code: Lymphocyte antigen 75 (1722 aa).

A signal peptide spans 1–27 (MGTRRVTPGCAAGLLVLLLRCFGLAEP). The Extracellular portion of the chain corresponds to 28–1666 (SEFSGDDSFT…VVCKVPLSPD (1639 aa)). Residues 32–182 (GDDSFTIVNE…FLVGETWHHD (151 aa)) enclose the Ricin B-type lectin domain. N135 is a glycosylation site (N-linked (GlcNAc...) asparagine). In terms of domain architecture, Fibronectin type-II spans 164–211 (SYGRPCEFPFLVGETWHHDCIRDENHSGPWCATTLNYEYDQKWGICLK). Disulfide bonds link C169-C194, C183-C209, C247-C340, and C317-C332. The C-type lectin 1 domain occupies 225-341 (QIGSCYQFNN…CEAQQPYVCK (117 aa)). N-linked (GlcNAc...) asparagine glycans are attached at residues N345 and N377. C-type lectin domains follow at residues 368–486 (QNGF…YVCK), 493–625 (NDTR…ICKK), and 652–791 (SNLS…WVCQ). 2 disulfides stabilise this stretch: C389–C485 and C462–C477. N529 carries an N-linked (GlcNAc...) asparagine glycan. Disulfide bonds link C597/C614, C678/C790, and C752/C782. Residues N843 and N865 are each glycosylated (N-linked (GlcNAc...) asparagine). Phosphotyrosine is present on Y933. Residues N934 and N1076 are each glycosylated (N-linked (GlcNAc...) asparagine). 2 C-type lectin domains span residues 958–1091 (FQNK…LCQK) and 1110–1222 (YLNN…ICYY). Cystine bridges form between C1060-C1080 and C1197-C1211. Residues N1225, N1320, and N1392 are each glycosylated (N-linked (GlcNAc...) asparagine). In terms of domain architecture, C-type lectin 7 spans 1251 to 1374 (FQNSCYNFMI…VIDETLHFYQ (124 aa)). C-type lectin domains are found at residues 1401 to 1513 (YEDG…ICYK) and 1542 to 1661 (YGDH…VCKV). C1488 and C1502 are oxidised to a cystine. N-linked (GlcNAc...) asparagine glycosylation is found at N1593 and N1626. A disulfide bridge links C1635 with C1650. A helical membrane pass occupies residues 1667 to 1691 (YRGIAVLFAVLSVLALISGLIWFLV). Over 1692 to 1722 (QRNHFRWTGLSSVRYEHGANEDEVMLPSFHD) the chain is Cytoplasmic. Phosphoserine occurs at positions 1703 and 1719.

In terms of tissue distribution, expressed in the thymus and cultured bone marrow cells.

The protein localises to the membrane. Its function is as follows. Acts as an endocytic receptor to direct captured antigens from the extracellular space to a specialized antigen-processing compartment. Causes reduced proliferation of B lymphocytes. The polypeptide is Lymphocyte antigen 75 (LY75) (Mesocricetus auratus (Golden hamster)).